Reading from the N-terminus, the 637-residue chain is 5-hmdU DNA kinase (637 aa).

Residues 249 to 269 (AEKGVKRGKKGRKTSPVAKTL) are disordered.

It belongs to the thymidylate kinase family. 5-hmdU DNA kinase subfamily.

It catalyses the reaction 5-hydroxymethyl-dUMP in DNA + ATP = 5-phosphomethyl-dUMP in DNA + ADP + H(+). In terms of biological role, phosphorylates 5-hydroxymethyluracil (5hmdU) into 5-phosphomethyl-2'-deoxyuridine (5- PmdU) on DNA as a step in the pathway leading to thymidine hypermodifications in the viral genome. The phosphate is added internally to the DNA polymer. As a final result of the pathway of hypermodification, alpha-glutamylthymidine (YdTMP) substitutes for about 20% of the thymidines in the viral DNA, the 80% left are dTMP. These modifications probably prevent degradation of viral genome by the host restriction-modification antiviral defense system. The chain is 5-hmdU DNA kinase from Bacillus phage SP10 (Bacillus phage SP-10).